The primary structure comprises 345 residues: Tropomodulin-4 (345 aa).

Positions 42–63 (NMLLPAGLRQRDQTKKSPTGPL) are disordered.

The protein belongs to the tropomodulin family. In terms of assembly, binds to the N-terminus of tropomyosin and to actin. Highly expressed in skeletal muscle.

It is found in the cytoplasm. The protein localises to the cytoskeleton. Its function is as follows. Blocks the elongation and depolymerization of the actin filaments at the pointed end. The Tmod/TM complex contributes to the formation of the short actin protofilament, which in turn defines the geometry of the membrane skeleton. In Homo sapiens (Human), this protein is Tropomodulin-4 (TMOD4).